Here is a 244-residue protein sequence, read N- to C-terminus: MNEIREAAVQTPEQATAVIRAEALAKTYAEGKMRTPVFDGLDLSVATGETVAIVGASGAGKSTLLHLLGGLDIPTSGEVYVAGERMSALSDAQRGKLRNQALGFVYQFHHLLPEFTALENVMMPVLLSGKDVAVAKGQALQLLESVGLGHRVEHKPSELSGGERQRCAVARALVNKPGCVLGDEPTGNLDDKTAGTVFELMLELNRAQRTSLVLVTHDRGLARRLDRVLELNQGKLRELAPSAV.

The 226-residue stretch at 19–244 folds into the ABC transporter domain; the sequence is IRAEALAKTY…KLRELAPSAV (226 aa). 55-62 serves as a coordination point for ATP; it reads GASGAGKS.

The protein belongs to the ABC transporter superfamily. Lipoprotein translocase (TC 3.A.1.125) family. The complex is composed of two ATP-binding proteins (LolD) and two transmembrane proteins (LolC and LolE).

Its subcellular location is the cell inner membrane. Its function is as follows. Part of the ABC transporter complex LolCDE involved in the translocation of mature outer membrane-directed lipoproteins, from the inner membrane to the periplasmic chaperone, LolA. Responsible for the formation of the LolA-lipoprotein complex in an ATP-dependent manner. This Xanthomonas euvesicatoria pv. vesicatoria (strain 85-10) (Xanthomonas campestris pv. vesicatoria) protein is Lipoprotein-releasing system ATP-binding protein LolD.